Here is a 531-residue protein sequence, read N- to C-terminus: Putative UDP-glucuronosyltransferase ugt-46 (531 aa).

A signal peptide spans methionine 1 to serine 17. Asparagine 304 carries N-linked (GlcNAc...) asparagine glycosylation. The chain crosses the membrane as a helical span at residues valine 493–tyrosine 513.

The protein belongs to the UDP-glycosyltransferase family.

The protein localises to the membrane. It carries out the reaction glucuronate acceptor + UDP-alpha-D-glucuronate = acceptor beta-D-glucuronoside + UDP + H(+). In Caenorhabditis elegans, this protein is Putative UDP-glucuronosyltransferase ugt-46 (ugt-46).